Here is a 378-residue protein sequence, read N- to C-terminus: Manganese peroxidase 1 (378 aa).

The first 21 residues, 1–21, serve as a signal peptide directing secretion; it reads MAFKSLIAFVALAAAVRAAPT. 5 disulfide bridges follow: C24–C36, C35–C310, C54–C138, C274–C340, and C362–C369. Mn(2+) is bound by residues E56 and E60. The active-site Proton acceptor is the H67. Ca(2+) contacts are provided by D68, G83, D85, and S87. N-linked (GlcNAc...) asparagine glycosylation is found at N97 and N152. H194 is a heme b binding site. S195 lines the Ca(2+) pocket. D200 serves as a coordination point for Mn(2+). Residues D212, T214, T217, and D219 each contribute to the Ca(2+) site. Residue N238 is glycosylated (N-linked (GlcNAc...) asparagine).

Belongs to the peroxidase family. Ligninase subfamily. Ca(2+) serves as cofactor. It depends on heme b as a cofactor.

The protein resides in the secreted. The enzyme catalyses 2 Mn(2+) + H2O2 + 2 H(+) = 2 Mn(3+) + 2 H2O. In terms of biological role, catalyzes the oxidation of Mn(2+) to Mn(3+). The latter, acting as a diffusible redox mediator, is capable of oxidizing a variety of lignin compounds. The chain is Manganese peroxidase 1 (MNP1) from Phanerodontia chrysosporium (White-rot fungus).